Here is a 767-residue protein sequence, read N- to C-terminus: MSNSAQSRRIRVTIVAADGLYKRDVFRFPDPFAVLTVDGEQTHTTTAIKKTLNPYWNETFEVNVTDNSTIAIQVFDQKKFKKKGQGFLGVINLRVGDVLDLAIGGDEMLTRDLKKSNENTVVHGKIIINLSTTAQSTLQVPSSAASGARTQRTSITNDPQSSQSSSVSRNPASSRAGSPTRDNAPAASPASSEPRTFSSFEDQYGRLPPGWERRTDNLGRTYYVDHNTRSTTWIRPNLSSVAGAAAAELHSSASSANVTEGVQPSSSNAARRTEASVLTSNATTAGSGELPPGWEQRYTPEGRPYFVDHNTRTTTWVDPRRQQYIRSYGGPNNATIQQQPVSQLGPLPSGWEMRLTNTARVYFVDHNTKTTTWDDPRLPSSLDQNVPQYKRDFRRKLIYFLSQPALHPLPGQCHIKVRRNHIFEDSYAEIMRQSATDLKKRLMIKFDGEDGLDYGGLSREYFFLLSHEMFNPFYCLFEYSSVDNYTLQINPHSGINPEHLNYFKFIGRVIGLAIFHRRFVDAFFVVSFYKMILQKKVTLQDMESMDAEYYRSLVWILDNDITGVLDLTFSVEDNCFGEVVTIDLKPNGRNIEVTEENKREYVDLVTVWRIQKRIEEQFNAFHEGFSELIPQELINVFDERELELLIGGISEIDMEDWKKHTDYRSYSENDQIIKWFWELMDEWSNEKKSRLLQFTTGTSRIPVNGFKDLQGSDGPRKFTIEKAGEPNKLPKAHTCFNRLDLPPYTSKKDLDHKLSIAVEETIGFGQE.

Residues 1-111 (MSNSAQSRRI…AIGGDEMLTR (111 aa)) form the C2 domain. Polar residues predominate over residues 138–158 (LQVPSSAASGARTQRTSITND). 2 disordered regions span residues 138 to 216 (LQVP…RRTD) and 252 to 306 (SASS…RPYF). Thr156 is subject to Phosphothreonine. The span at 159-176 (PQSSQSSSVSRNPASSRA) shows a compositional bias: low complexity. Ser178 carries the phosphoserine modification. The residue at position 180 (Thr180) is a Phosphothreonine. A compositionally biased stretch (low complexity) spans 184–194 (APAASPASSEP). One can recognise a WW 1 domain in the interval 211–236 (WERRTDNLGRTYYVDHNTRSTTWIRP). Residues 257–286 (NVTEGVQPSSSNAARRTEASVLTSNATTAG) show a composition bias toward polar residues. WW domains follow at residues 294 to 319 (WEQRYTPEGRPYFVDHNTRTTTWVDP) and 351 to 376 (WEMRLTNTARVYFVDHNTKTTTWDDP). The HECT domain maps to 463-767 (FLLSHEMFNP…VEETIGFGQE (305 aa)). Residue Cys735 is the Glycyl thioester intermediate of the active site.

Its subcellular location is the membrane. It is found in the cytoplasm. The catalysed reaction is S-ubiquitinyl-[E2 ubiquitin-conjugating enzyme]-L-cysteine + [acceptor protein]-L-lysine = [E2 ubiquitin-conjugating enzyme]-L-cysteine + N(6)-ubiquitinyl-[acceptor protein]-L-lysine.. Its pathway is protein modification; protein ubiquitination. In terms of biological role, E3 ubiquitin-protein ligase which accepts ubiquitin from an E2 ubiquitin-conjugating enzyme in the form of a thioester and then directly transfers the ubiquitin to targeted substrates. Regulates ubiquitination of cdc25. This Schizosaccharomyces pombe (strain 972 / ATCC 24843) (Fission yeast) protein is E3 ubiquitin-protein ligase pub1 (pub1).